A 471-amino-acid chain; its full sequence is 3-isopropylmalate dehydratase large subunit (471 aa).

3 residues coordinate [4Fe-4S] cluster: C349, C409, and C412.

The protein belongs to the aconitase/IPM isomerase family. LeuC type 1 subfamily. As to quaternary structure, heterodimer of LeuC and LeuD. Requires [4Fe-4S] cluster as cofactor.

The enzyme catalyses (2R,3S)-3-isopropylmalate = (2S)-2-isopropylmalate. It functions in the pathway amino-acid biosynthesis; L-leucine biosynthesis; L-leucine from 3-methyl-2-oxobutanoate: step 2/4. Catalyzes the isomerization between 2-isopropylmalate and 3-isopropylmalate, via the formation of 2-isopropylmaleate. This Aliivibrio fischeri (strain ATCC 700601 / ES114) (Vibrio fischeri) protein is 3-isopropylmalate dehydratase large subunit.